We begin with the raw amino-acid sequence, 461 residues long: Cysteine--tRNA ligase (461 aa).

Cys28 is a Zn(2+) binding site. The 'HIGH' region signature appears at Val30–His40. The Zn(2+) site is built by Cys211, His236, and Glu240. The short motif at Lys268–Ser272 is the 'KMSKS' region element. Residue Lys271 participates in ATP binding.

It belongs to the class-I aminoacyl-tRNA synthetase family. Monomer. It depends on Zn(2+) as a cofactor.

Its subcellular location is the cytoplasm. The catalysed reaction is tRNA(Cys) + L-cysteine + ATP = L-cysteinyl-tRNA(Cys) + AMP + diphosphate. The polypeptide is Cysteine--tRNA ligase (Aliivibrio fischeri (strain ATCC 700601 / ES114) (Vibrio fischeri)).